A 433-amino-acid polypeptide reads, in one-letter code: 3-phosphoshikimate 1-carboxyvinyltransferase (433 aa).

Positions 23, 24, and 28 each coordinate 3-phosphoshikimate. K23 contacts phosphoenolpyruvate. Phosphoenolpyruvate contacts are provided by G95 and R123. 3-phosphoshikimate contacts are provided by S170, S171, Q172, S198, D317, and K344. Q172 lines the phosphoenolpyruvate pocket. D317 functions as the Proton acceptor in the catalytic mechanism. Residues R348, R391, and K416 each coordinate phosphoenolpyruvate.

This sequence belongs to the EPSP synthase family. In terms of assembly, monomer.

The protein resides in the cytoplasm. It catalyses the reaction 3-phosphoshikimate + phosphoenolpyruvate = 5-O-(1-carboxyvinyl)-3-phosphoshikimate + phosphate. The protein operates within metabolic intermediate biosynthesis; chorismate biosynthesis; chorismate from D-erythrose 4-phosphate and phosphoenolpyruvate: step 6/7. Functionally, catalyzes the transfer of the enolpyruvyl moiety of phosphoenolpyruvate (PEP) to the 5-hydroxyl of shikimate-3-phosphate (S3P) to produce enolpyruvyl shikimate-3-phosphate and inorganic phosphate. This Neisseria gonorrhoeae (strain NCCP11945) protein is 3-phosphoshikimate 1-carboxyvinyltransferase.